We begin with the raw amino-acid sequence, 277 residues long: Undecaprenyl-diphosphatase 1 (277 aa).

Transmembrane regions (helical) follow at residues 46–66 (VVGF…VYFF), 95–115 (WWVI…KSLI), 119–139 (LASL…MWAA), 165–185 (ILAL…TALI), 191–211 (VAAT…AGLY), 216–236 (ALGT…SFVV), and 256–276 (FVIY…TGVL).

It belongs to the UppP family.

Its subcellular location is the cell membrane. The catalysed reaction is di-trans,octa-cis-undecaprenyl diphosphate + H2O = di-trans,octa-cis-undecaprenyl phosphate + phosphate + H(+). In terms of biological role, catalyzes the dephosphorylation of undecaprenyl diphosphate (UPP). Confers resistance to bacitracin. The chain is Undecaprenyl-diphosphatase 1 from Streptomyces avermitilis (strain ATCC 31267 / DSM 46492 / JCM 5070 / NBRC 14893 / NCIMB 12804 / NRRL 8165 / MA-4680).